The primary structure comprises 592 residues: Aspartate--tRNA(Asp/Asn) ligase (592 aa).

Position 176 (Glu176) interacts with L-aspartate. The segment at 200 to 203 (QLYK) is aspartate. Residue Arg222 coordinates L-aspartate. ATP contacts are provided by residues 222-224 (RDE) and Gln231. His452 serves as a coordination point for L-aspartate. Glu486 provides a ligand contact to ATP. Arg493 is a binding site for L-aspartate. 538-541 (GVDR) serves as a coordination point for ATP.

This sequence belongs to the class-II aminoacyl-tRNA synthetase family. Type 1 subfamily. As to quaternary structure, homodimer.

The protein localises to the cytoplasm. The catalysed reaction is tRNA(Asx) + L-aspartate + ATP = L-aspartyl-tRNA(Asx) + AMP + diphosphate. Its function is as follows. Aspartyl-tRNA synthetase with relaxed tRNA specificity since it is able to aspartylate not only its cognate tRNA(Asp) but also tRNA(Asn). Reaction proceeds in two steps: L-aspartate is first activated by ATP to form Asp-AMP and then transferred to the acceptor end of tRNA(Asp/Asn). The polypeptide is Aspartate--tRNA(Asp/Asn) ligase (Rhodopirellula baltica (strain DSM 10527 / NCIMB 13988 / SH1)).